A 238-amino-acid polypeptide reads, in one-letter code: Cysteine-rich venom protein pseudecin (238 aa).

Residues 1–19 (MIAFIVLLSLAAVLQQSSG) form the signal peptide. Positions 20-28 (TVDFASESS) are excised as a propeptide. In terms of domain architecture, SCP spans 38–164 (VDKHNALRRS…SSKYLYVCQY (127 aa)). Zn(2+) is bound by residues T51 and S106. Disulfide bonds link C75–C153, C92–C165, C148–C162, C184–C191, C187–C196, C200–C233, C209–C227, and C218–C231. Residues 200–233 (CNYNNDFSNCKSLAKKSKCQTEWIKKKCPASCFC) form the ShKT domain.

In terms of tissue distribution, expressed by the venom gland.

The protein localises to the secreted. In terms of biological role, blocks olfactory (CNGA2) and retinal (CNGA1) CNG channel currents. Is really less potent that Pseudechetoxin. Does not affect neither depolarization- nor caffeine-induced contraction of smooth muscle. This Pseudechis porphyriacus (Red-bellied black snake) protein is Cysteine-rich venom protein pseudecin.